Consider the following 1048-residue polypeptide: NACHT, LRR and PYD domains-containing protein 8 (1048 aa).

The interval 1–23 (MSDVNPPSDTPIPFSSSSTHSSH) is disordered. Over residues 11-23 (PIPFSSSSTHSSH) the composition is skewed to low complexity. One can recognise a Pyrin domain in the interval 33–131 (PGSPCENGVM…NAILPTLEPE (99 aa)). Positions 204 to 527 (KTVAIQGAPG…FYVLCFPQRL (324 aa)) constitute an NACHT domain. 210 to 217 (GAPGIGKT) provides a ligand contact to ATP. 5 LRR repeats span residues 815 to 838 (NGHL…YLSV), 839 to 861 (AQLE…SLAS), 866 to 890 (SKML…IWNA), 923 to 950 (NKTL…ALKN), and 980 to 1007 (NQHL…AFSS). The tract at residues 1029–1048 (PTPHPPDFTGKSDCLSQINP) is disordered.

The protein belongs to the NLRP family.

The protein localises to the cytoplasm. Involved in inflammation. This is NACHT, LRR and PYD domains-containing protein 8 (NLRP8) from Homo sapiens (Human).